The sequence spans 611 residues: DNA mismatch repair protein MutL (611 aa).

The protein belongs to the DNA mismatch repair MutL/HexB family.

Functionally, this protein is involved in the repair of mismatches in DNA. It is required for dam-dependent methyl-directed DNA mismatch repair. May act as a 'molecular matchmaker', a protein that promotes the formation of a stable complex between two or more DNA-binding proteins in an ATP-dependent manner without itself being part of a final effector complex. This is DNA mismatch repair protein MutL from Rickettsia bellii (strain RML369-C).